Here is a 136-residue protein sequence, read N- to C-terminus: Large ribosomal subunit protein uL16c (136 aa).

It belongs to the universal ribosomal protein uL16 family. In terms of assembly, part of the 50S ribosomal subunit.

The protein resides in the plastid. It localises to the chloroplast. In Chlamydomonas reinhardtii (Chlamydomonas smithii), this protein is Large ribosomal subunit protein uL16c.